The following is a 252-amino-acid chain: Chitooligosaccharide deacetylase (252 aa).

Mg(2+) is bound by residues His61 and His125.

This sequence belongs to the YdjC deacetylase family. ChbG subfamily. As to quaternary structure, homodimer. The cofactor is Mg(2+).

The protein localises to the cytoplasm. The enzyme catalyses N,N'-diacetylchitobiose + H2O = N-acetyl-beta-D-glucosaminyl-(1-&gt;4)-D-glucosamine + acetate. It carries out the reaction diacetylchitobiose-6'-phosphate + H2O = N'-monoacetylchitobiose-6'-phosphate + acetate. It functions in the pathway glycan degradation; chitin degradation. Functionally, involved in the degradation of chitin. ChbG is essential for growth on the acetylated chitooligosaccharides chitobiose and chitotriose but is dispensable for growth on cellobiose and chitosan dimer, the deacetylated form of chitobiose. Deacetylation of chitobiose-6-P and chitotriose-6-P is necessary for both the activation of the chb promoter by the regulatory protein ChbR and the hydrolysis of phosphorylated beta-glucosides by the phospho-beta-glucosidase ChbF. Catalyzes the removal of only one acetyl group from chitobiose-6-P to yield monoacetylchitobiose-6-P, the inducer of ChbR and the substrate of ChbF. This chain is Chitooligosaccharide deacetylase, found in Citrobacter koseri (strain ATCC BAA-895 / CDC 4225-83 / SGSC4696).